Consider the following 372-residue polypeptide: Hydrogenase-1 small chain (372 aa).

Residues 1-45 constitute a signal peptide (tat-type signal); it reads MNNEETFYQAMRRQGVTRRSFLKYCSLAATSLGLGAGMAPKIAWA. Over 46 to 326 the chain is Periplasmic; sequence LENKPRIPVV…QMGTHSTADT (281 aa). 8 residues coordinate [4Fe-4S] cluster: Cys-62, Cys-65, Cys-160, Cys-194, His-232, Cys-235, Cys-260, and Cys-266. The [3Fe-4S] cluster site is built by Cys-275, Cys-294, and Cys-297. Residues 327 to 347 traverse the membrane as a helical segment; sequence VGLTALGVVAAAVGVHAVASA. The interval 347 to 372 is disordered; the sequence is AVDQRRRHNQQPTETEHQPGNEDKQA. The Cytoplasmic portion of the chain corresponds to 348–372; the sequence is VDQRRRHNQQPTETEHQPGNEDKQA. Basic and acidic residues predominate over residues 360–372; it reads ETEHQPGNEDKQA.

It belongs to the [NiFe]/[NiFeSe] hydrogenase small subunit family. In terms of assembly, heterodimer of a large and a small subunit. It depends on [4Fe-4S] cluster as a cofactor. The cofactor is [3Fe-4S] cluster. Predicted to be exported by the Tat system. The position of the signal peptide cleavage has not been experimentally proven.

The protein resides in the cell inner membrane. The enzyme catalyses H2 + A = AH2. In terms of biological role, this is one of three E.coli hydrogenases synthesized in response to different physiological conditions. HYD1 is believed to have a role in hydrogen cycling during fermentative growth. The polypeptide is Hydrogenase-1 small chain (hyaA) (Escherichia coli O6:H1 (strain CFT073 / ATCC 700928 / UPEC)).